The following is a 238-amino-acid chain: Uridylate kinase (238 aa).

Position 12–15 (12–15 (KLSG)) interacts with ATP. Residue Gly-54 participates in UMP binding. ATP-binding residues include Gly-55 and Arg-59. UMP-binding positions include Asp-74 and 135-142 (TGNPFFTT). ATP contacts are provided by Thr-162, Tyr-168, and Asp-171.

This sequence belongs to the UMP kinase family. Homohexamer.

Its subcellular location is the cytoplasm. It carries out the reaction UMP + ATP = UDP + ADP. It functions in the pathway pyrimidine metabolism; CTP biosynthesis via de novo pathway; UDP from UMP (UMPK route): step 1/1. Inhibited by UTP. Its function is as follows. Catalyzes the reversible phosphorylation of UMP to UDP. The protein is Uridylate kinase of Bordetella bronchiseptica (strain ATCC BAA-588 / NCTC 13252 / RB50) (Alcaligenes bronchisepticus).